We begin with the raw amino-acid sequence, 197 residues long: ATP-dependent Clp protease proteolytic subunit 1 (197 aa).

Serine 99 (nucleophile) is an active-site residue. Histidine 124 is an active-site residue.

The protein belongs to the peptidase S14 family. As to quaternary structure, fourteen ClpP subunits assemble into 2 heptameric rings which stack back to back to give a disk-like structure with a central cavity, resembling the structure of eukaryotic proteasomes.

It localises to the cytoplasm. It carries out the reaction Hydrolysis of proteins to small peptides in the presence of ATP and magnesium. alpha-casein is the usual test substrate. In the absence of ATP, only oligopeptides shorter than five residues are hydrolyzed (such as succinyl-Leu-Tyr-|-NHMec, and Leu-Tyr-Leu-|-Tyr-Trp, in which cleavage of the -Tyr-|-Leu- and -Tyr-|-Trp bonds also occurs).. Cleaves peptides in various proteins in a process that requires ATP hydrolysis. Has a chymotrypsin-like activity. Plays a major role in the degradation of misfolded proteins. This Treponema denticola (strain ATCC 35405 / DSM 14222 / CIP 103919 / JCM 8153 / KCTC 15104) protein is ATP-dependent Clp protease proteolytic subunit 1.